The primary structure comprises 455 residues: Gamma-glutamyl phosphate reductase (455 aa).

Belongs to the gamma-glutamyl phosphate reductase family.

The protein resides in the cytoplasm. The catalysed reaction is L-glutamate 5-semialdehyde + phosphate + NADP(+) = L-glutamyl 5-phosphate + NADPH + H(+). Its pathway is amino-acid biosynthesis; L-proline biosynthesis; L-glutamate 5-semialdehyde from L-glutamate: step 2/2. In terms of biological role, catalyzes the NADPH-dependent reduction of L-glutamate 5-phosphate into L-glutamate 5-semialdehyde and phosphate. The product spontaneously undergoes cyclization to form 1-pyrroline-5-carboxylate. The polypeptide is Gamma-glutamyl phosphate reductase (Synechococcus sp. (strain JA-3-3Ab) (Cyanobacteria bacterium Yellowstone A-Prime)).